The sequence spans 655 residues: tRNA 5-methylaminomethyl-2-thiouridine biosynthesis bifunctional protein MnmC (655 aa).

A tRNA (mnm(5)s(2)U34)-methyltransferase region spans residues M1–A236. The FAD-dependent cmnm(5)s(2)U34 oxidoreductase stretch occupies residues I260 to S655.

It in the N-terminal section; belongs to the methyltransferase superfamily. tRNA (mnm(5)s(2)U34)-methyltransferase family. The protein in the C-terminal section; belongs to the DAO family. Requires FAD as cofactor.

The protein localises to the cytoplasm. The enzyme catalyses 5-aminomethyl-2-thiouridine(34) in tRNA + S-adenosyl-L-methionine = 5-methylaminomethyl-2-thiouridine(34) in tRNA + S-adenosyl-L-homocysteine + H(+). Its function is as follows. Catalyzes the last two steps in the biosynthesis of 5-methylaminomethyl-2-thiouridine (mnm(5)s(2)U) at the wobble position (U34) in tRNA. Catalyzes the FAD-dependent demodification of cmnm(5)s(2)U34 to nm(5)s(2)U34, followed by the transfer of a methyl group from S-adenosyl-L-methionine to nm(5)s(2)U34, to form mnm(5)s(2)U34. This Paraburkholderia phymatum (strain DSM 17167 / CIP 108236 / LMG 21445 / STM815) (Burkholderia phymatum) protein is tRNA 5-methylaminomethyl-2-thiouridine biosynthesis bifunctional protein MnmC.